We begin with the raw amino-acid sequence, 127 residues long: Protein B20 (127 aa).

The interval 86 to 127 (DRTGMNSESDSESDNISIKTEYENEYEFYDETQDQSTQHNDL) is disordered. A compositionally biased stretch (acidic residues) spans 108–118 (ENEYEFYDETQ).

The chain is Protein B20 from Homo sapiens (Human).